The sequence spans 178 residues: ATP-dependent protease subunit HslV (178 aa).

The active site involves Thr7. Residues Gly162, Cys165, and Thr168 each contribute to the Na(+) site.

This sequence belongs to the peptidase T1B family. HslV subfamily. In terms of assembly, a double ring-shaped homohexamer of HslV is capped on each side by a ring-shaped HslU homohexamer. The assembly of the HslU/HslV complex is dependent on binding of ATP.

The protein localises to the cytoplasm. The catalysed reaction is ATP-dependent cleavage of peptide bonds with broad specificity.. Its activity is regulated as follows. Allosterically activated by HslU binding. Functionally, protease subunit of a proteasome-like degradation complex believed to be a general protein degrading machinery. The protein is ATP-dependent protease subunit HslV of Paraburkholderia xenovorans (strain LB400).